The following is a 795-amino-acid chain: Histone acetyltransferase KAT2A (795 aa).

A compositionally biased stretch (polar residues) spans 1–18 (MADPAAQSSAQPRLQQAQ). The tract at residues 1-55 (MADPAAQSSAQPRLQQAQSSGPTGSNSNPGAGSSDPARPGLSQQQWSSQKKAQVR) is disordered. Residues 19–34 (SSGPTGSNSNPGAGSS) are compositionally biased toward low complexity. Positions 461–614 (VIGNSLSQKS…GATLMECELN (154 aa)) constitute an N-acetyltransferase domain. Catalysis depends on E533, which acts as the Proton donor/acceptor. Residues 537 to 539 (CAV), 544 to 550 (QVKGYGT), and Y575 each bind acetyl-CoA. Residues 537–539 (CAV), 544–550 (QVKGYGT), and Y575 each bind succinyl-CoA. The segment at 597–606 (LGYIKDYEGA) is loop 3. The Bromo domain occupies 686 to 790 (KDPDLLYNML…KFFYFKLKEA (105 aa)).

Belongs to the acetyltransferase family. GCN5 subfamily.

The protein localises to the nucleus. The protein resides in the chromosome. Its subcellular location is the cytoplasm. It is found in the cytoskeleton. It localises to the microtubule organizing center. The protein localises to the centrosome. It catalyses the reaction L-lysyl-[histone] + acetyl-CoA = N(6)-acetyl-L-lysyl-[histone] + CoA + H(+). It carries out the reaction L-lysyl-[protein] + acetyl-CoA = N(6)-acetyl-L-lysyl-[protein] + CoA + H(+). The enzyme catalyses succinyl-CoA + L-lysyl-[protein] = N(6)-succinyl-L-lysyl-[protein] + CoA + H(+). The catalysed reaction is glutaryl-CoA + L-lysyl-[protein] = N(6)-glutaryl-L-lysyl-[protein] + CoA + H(+). Protein lysine acyltransferase that can act as a acetyltransferase, glutaryltransferasesucc, succinyltransferase or malonyltransferase, depending on the context. Acts as a histone lysine succinyltransferase: catalyzes succinylation of histone H3 on 'Lys-79' (H3K79succ), with a maximum frequency around the transcription start sites of genes. Succinylation of histones gives a specific tag for epigenetic transcription activation. Association with the 2-oxoglutarate dehydrogenase complex, which provides succinyl-CoA, is required for histone succinylation. In different complexes, functions either as an acetyltransferase (HAT) or as a succinyltransferase: in the SAGA and ATAC complexes, acts as a histone acetyltransferase. Has significant histone acetyltransferase activity with core histones, but not with nucleosome core particles. Has a a strong preference for acetylation of H3 at 'Lys-9' (H3K9ac). Acetylation of histones gives a specific tag for epigenetic transcription activation. Also acetylates non-histone proteins, such as tbx5. Involved in heart and limb development by mediating acetylation of tbx5. Together with kat2b, required for growth and differentiation of craniofacial cartilage and bone by regulating acetylation of histone H3 at 'Lys-9' (H3K9ac). Also acts as a histone glutaryltransferase: catalyzes glutarylation of histone H4 on 'Lys-91' (H4K91glu), a mark that destabilizes nucleosomes by promoting dissociation of the H2A-H2B dimers from nucleosomes. The chain is Histone acetyltransferase KAT2A from Danio rerio (Zebrafish).